We begin with the raw amino-acid sequence, 313 residues long: Protein OPG185 (313 aa).

The first 16 residues, 1–16, serve as a signal peptide directing secretion; the sequence is MTRLSILLLLISLVYS. Over 17-277 the chain is Virion surface; sequence TPYPQTQISK…GKYSTKDYVK (261 aa). The region spanning 18 to 121 is the Ig-like V-type domain; that stretch reads PYPQTQISKK…TTNDTDKVDY (104 aa). Cys-36 and Cys-105 are joined by a disulfide. N-linked (GlcNAc...) asparagine; by host glycans are attached at residues Asn-71, Asn-114, Asn-163, Asn-182, and Asn-262. Residues 278 to 301 traverse the membrane as a helical segment; sequence VFGIAALIILSAVAIFCITYYICN. Over 302–313 the chain is Intravirion; it reads KRSRKYKTENKV.

The protein belongs to the orthopoxvirus OPG185 family. As to quaternary structure, heterodimerizes with OPG040. The heterodimer OPG185-OPG040 interacts with components of the entry fusion complex OPG143 and OPG094. Heterodimer with C3/VPC protein; disulfide-linked. Post-translationally, glycosylated; contains phosphate and sulfate-substituted glycans. O-glycosylation is required for hemagglutination and hemadsorption activities of infected cell membranes.

Its subcellular location is the virion membrane. The protein resides in the host membrane. Its function is as follows. Prevents cell to cell fusion by interacting with and directing the viral OPG040 protein on the host plasma membrane. The OPG185-OPG040 complex associates with components of the entry fusion complex (EFC) presumably to avoid superinfection and syncytium formation. Via its interaction with C3/VCP protein, protects the infected cell and probably also the extracellular enveloped virus from complement attack. The polypeptide is Protein OPG185 (OPG185) (Homo sapiens (Human)).